A 252-amino-acid chain; its full sequence is Phosphomannomutase (252 aa).

Aspartate 13 serves as the catalytic Nucleophile. 2 residues coordinate Mg(2+): aspartate 13 and aspartate 15. Aspartate 15 functions as the Proton donor/acceptor in the catalytic mechanism. The alpha-D-mannose 1-phosphate site is built by arginine 22, arginine 124, arginine 135, arginine 142, serine 180, and aspartate 182. Positions 208, 220, and 225 each coordinate Mg(2+).

It belongs to the eukaryotic PMM family. In terms of assembly, homodimer. Mg(2+) is required as a cofactor.

The protein resides in the cytoplasm. The catalysed reaction is alpha-D-mannose 1-phosphate = D-mannose 6-phosphate. It functions in the pathway nucleotide-sugar biosynthesis; GDP-alpha-D-mannose biosynthesis; alpha-D-mannose 1-phosphate from D-fructose 6-phosphate: step 2/2. Functionally, catalyzes the interconversion of mannose-6-phosphate to mannose-1-phosphate, the precursor for the synthesis of GDP-mannose. GDP-mannose is an essential sugar nucleotide for the synthesis of D-mannose-containing cell wall polysaccharides (galactomannans and glucomannans), glycolipids, glycoproteins and the antioxidant L-ascorbate. Can complement the yeast temperature-sensitive mutant sec53-6. The polypeptide is Phosphomannomutase (Solanum lycopersicum (Tomato)).